The sequence spans 372 residues: Probable G-protein coupled receptor 45 (372 aa).

Residues 1–38 (MACNSTSLEAYTYLLLNTSNASDSGSTQLPAPLRISLA) are Extracellular-facing. N-linked (GlcNAc...) asparagine glycosylation is found at Asn-4, Asn-17, and Asn-20. A helical transmembrane segment spans residues 39–59 (IVMLLMTVVGFLGNTVVCIIV). At 60–75 (YQRPAMRSAINLLLAT) the chain is on the cytoplasmic side. Residues 76 to 96 (LAFSDIMLSLCCMPFTAVTLI) form a helical membrane-spanning segment. At 97–109 (TVRWHFGDHFCRL) the chain is on the extracellular side. A helical transmembrane segment spans residues 110-130 (SATLYWFFVLEGVAILLIISV). At 131–149 (DRFLIIVQRQDKLNPRRAK) the chain is on the cytoplasmic side. The chain crosses the membrane as a helical span at residues 150–170 (VIIAVSWVLSFCIAGPSLTGW). Residues 171–198 (TLVEVPARAPQCVLGYTELPADRAYVVT) are Extracellular-facing. A helical transmembrane segment spans residues 199–219 (LVVAVFFAPFGVMLCAYMCIL). Residues 220-268 (NTVRKNAVRVHNQSDSLDLRQLTRAGLRRLQRQQQVSVDLSFKTKAFTT) lie on the Cytoplasmic side of the membrane. The chain crosses the membrane as a helical span at residues 269–289 (ILILFVGFSLCWLPHSVYSLL). Residues 290-305 (SVFSQRFYCGSSFYAT) are Extracellular-facing. A helical membrane pass occupies residues 306-326 (STCVLWLSYLKSVFNPIVYCW). Topologically, residues 327–372 (RIKKFREACIELLPQTFQILPKVPERIRRRIQPSTVYVCNENQSAV) are cytoplasmic.

The protein belongs to the G-protein coupled receptor 1 family. In terms of tissue distribution, expressed in brain; detected in the basal forebrain, frontal cortex, and caudate, but not in thalamus, hippocampus, or putamen.

The protein resides in the cell membrane. Functionally, orphan receptor. May play a role in brain function. The sequence is that of Probable G-protein coupled receptor 45 (GPR45) from Homo sapiens (Human).